A 289-amino-acid polypeptide reads, in one-letter code: Survival motor neuron protein (289 aa).

Residues 1-10 show a composition bias toward gly residues; the sequence is MAMGSGGGAG. Residues 1-27 form a disordered region; the sequence is MAMGSGGGAGSEQEDTVLFRRGTGQSD. The segment at 11–42 is P1 (binding site for GEMIN2); sequence SEQEDTVLFRRGTGQSDDSDIWDDTALIKAYD. Phosphothreonine is present on T23. 2 positions are modified to phosphoserine: S26 and S29. K49 is covalently cross-linked (Glycyl lysine isopeptide (Lys-Gly) (interchain with G-Cter in SUMO2)). The tract at residues 55–88 is disordered; the sequence is GDMCETSDKPKGTARRKPAKKNKNQKKNATAPLK. Residues 66 to 80 show a composition bias toward basic residues; the sequence is GTARRKPAKKNKNQK. T67 carries the phosphothreonine modification. In terms of domain architecture, Tudor spans 89–149; that stretch reads QWKAGDKCSA…LSPTCEVANN (61 aa). The tract at residues 95–205 is required for interaction with RPP20/POP7; the sequence is KCSAVWSEDG…VPGAGLGPGK (111 aa). Positions 150 to 226 are disordered; that stretch reads TEQNTQENES…PPPPPPFLPC (77 aa). Residues 171 to 181 show a composition bias toward basic residues; sequence RSLRSKAHSKS. K205 is covalently cross-linked (Glycyl lysine isopeptide (Lys-Gly) (interchain with G-Cter in SUMO2)). Pro residues predominate over residues 212-226; it reads GPPPPPPPPPPFLPC. The segment at 235 to 262 is P2 (binding site for SM B); that stretch reads PPIIPPPPPISPDCLDDTDALGSMLISW. Residues 274-289 form a required for interaction with SYNCRIP region; sequence GFRQNKKEGKKCSHTN.

The protein belongs to the SMN family. As to quaternary structure, homooligomer; may form higher order homooligomers in the dimer to octamer range. Part of the core SMN complex that contains SMN1, GEMIN2/SIP1, DDX20/GEMIN3, GEMIN4, GEMIN5, GEMIN6, GEMIN7, GEMIN8 and STRAP/UNRIP. Part of the SMN-Sm complex that contains SMN1, GEMIN2/SIP1, DDX20/GEMIN3, GEMIN4, GEMIN5, GEMIN6, GEMIN7, GEMIN8, STRAP/UNRIP and the Sm proteins SNRPB, SNRPD1, SNRPD2, SNRPD3, SNRPE, SNRPF and SNRPG. Component of an import snRNP complex composed of KPNB1, RNUT1, SMN1 and ZNF259. Interacts with DDX20, FBL, NOLA1, RNUT1 and with several spliceosomal snRNP core Sm proteins, including SNRPB, SNRPD1, SNRPD2, SNRPD3, SNRPE and ILF3. Interacts with GEMIN2; the interaction is direct. Interacts with GEMIN3; the interaction is direct. Interacts with GEMIN8; the interaction is direct. Interacts with SNRPB; the interaction is direct. Interacts (via Tudor domain) with SNRPD1 (via C-terminus); the interaction is direct. Interacts with SNRPD2; the interaction is direct. Interacts (via Tudor domain) with SNRPD3 (via C-terminus); the interaction is direct. Interacts with SNRPE; the interaction is direct. Interacts with OSTF1, LSM10, LSM11 and RPP20/POP7. Interacts (via C-terminal region) with ZPR1 (via C-terminal region). Interacts (via Tudor domain) with COIL. Interacts with SETX; recruits SETX to POLR2A. Interacts with POLR2A (via the C-terminal domain (CTD)). Interacts with PRMT5. Interacts with XRN2. Interacts (via C-terminus) with FMR1 (via C-terminus); the interaction is direct and occurs in a RNA-independent manner. Interacts with SYNCRIP. Interacts (via Tudor domain) with SF3B2 (methylated form). Interacts with WRAP53/TCAB1. Interacts (via Tudor domain) with ELAVL4 in an RNA-independent manner; the interaction is required for localization of ELAVL4 to RNA granules. Interacts with FRG1.

Its subcellular location is the nucleus. It localises to the gem. It is found in the cajal body. The protein localises to the cytoplasm. The protein resides in the cytoplasmic granule. Its subcellular location is the perikaryon. It localises to the cell projection. It is found in the neuron projection. The protein localises to the axon. The protein resides in the myofibril. Its subcellular location is the sarcomere. It localises to the z line. Functionally, the SMN complex catalyzes the assembly of small nuclear ribonucleoproteins (snRNPs), the building blocks of the spliceosome, and thereby plays an important role in the splicing of cellular pre-mRNAs. Most spliceosomal snRNPs contain a common set of Sm proteins SNRPB, SNRPD1, SNRPD2, SNRPD3, SNRPE, SNRPF and SNRPG that assemble in a heptameric protein ring on the Sm site of the small nuclear RNA to form the core snRNP (Sm core). In the cytosol, the Sm proteins SNRPD1, SNRPD2, SNRPE, SNRPF and SNRPG are trapped in an inactive 6S pICln-Sm complex by the chaperone CLNS1A that controls the assembly of the core snRNP. To assemble core snRNPs, the SMN complex accepts the trapped 5Sm proteins from CLNS1A forming an intermediate. Binding of snRNA inside 5Sm ultimately triggers eviction of the SMN complex, thereby allowing binding of SNRPD3 and SNRPB to complete assembly of the core snRNP. Within the SMN complex, SMN1 acts as a structural backbone and together with GEMIN2 it gathers the Sm complex subunits. Ensures the correct splicing of U12 intron-containing genes that may be important for normal motor and proprioceptive neurons development. Also required for resolving RNA-DNA hybrids created by RNA polymerase II, that form R-loop in transcription terminal regions, an important step in proper transcription termination. May also play a role in the metabolism of small nucleolar ribonucleoprotein (snoRNPs). The protein is Survival motor neuron protein (Smn1) of Rattus norvegicus (Rat).